The following is a 256-amino-acid chain: Thiazole synthase (256 aa).

Lys-99 acts as the Schiff-base intermediate with DXP in catalysis. Residues Gly-160, 186-187, and 208-209 each bind 1-deoxy-D-xylulose 5-phosphate; these read AG and NT.

Belongs to the ThiG family. In terms of assembly, homotetramer. Forms heterodimers with either ThiH or ThiS.

The protein resides in the cytoplasm. The enzyme catalyses [ThiS sulfur-carrier protein]-C-terminal-Gly-aminoethanethioate + 2-iminoacetate + 1-deoxy-D-xylulose 5-phosphate = [ThiS sulfur-carrier protein]-C-terminal Gly-Gly + 2-[(2R,5Z)-2-carboxy-4-methylthiazol-5(2H)-ylidene]ethyl phosphate + 2 H2O + H(+). The protein operates within cofactor biosynthesis; thiamine diphosphate biosynthesis. In terms of biological role, catalyzes the rearrangement of 1-deoxy-D-xylulose 5-phosphate (DXP) to produce the thiazole phosphate moiety of thiamine. Sulfur is provided by the thiocarboxylate moiety of the carrier protein ThiS. In vitro, sulfur can be provided by H(2)S. This Neorickettsia sennetsu (strain ATCC VR-367 / Miyayama) (Ehrlichia sennetsu) protein is Thiazole synthase.